The following is a 435-amino-acid chain: MAKVLKSSQSCHFPSPSSSSSTSCGGGNDGSNRDPHSPFNISRREEEEEEEERSEKERERFELSSALEILVSAIRRSVIGGCVGEEDLCSMEIGVPTDVRHVAHVTFDRFHGFLGLPVEFEPEVPRRAPSASATVFGVSTESMQLSYDTRGNIVPTILLMMQSHLYSRGGLRVEGIFRINGENGQEEYIREELNKGIIPDNIDVHCLASLIKAWFRELPSGVLDSLSPEQVMESESEDECVELVRLLPSTEASLLDWAINLMADVVEMEQLNKMNARNIAMVFAPNMTQMLDPLTALMYAVQVMNFLKTLIVKTLKDRKESRDKLVPASNPSPRDHNGDQSSSRQLLHLMKANKEETLDNFEAEMKDKEESADEEEEECAESVELVDIKKSSLVNNSSGGFGQKHIGWEEQRTMSKASSIVGRVNYRVELFEAWR.

The interval 1 to 59 (MAKVLKSSQSCHFPSPSSSSSTSCGGGNDGSNRDPHSPFNISRREEEEEEEERSEKERE) is disordered. Positions 7–23 (SSQSCHFPSPSSSSSTS) are enriched in low complexity. The CRIB domain maps to 93 to 106 (IGVPTDVRHVAHVT). Residues 138–319 (VSTESMQLSY…LIVKTLKDRK (182 aa)) enclose the Rho-GAP domain. The disordered stretch occupies residues 321-343 (SRDKLVPASNPSPRDHNGDQSSS).

Its function is as follows. Acts as a GTPase activator for the Rac-type GTPase by converting it to an inactive GDP-bound state. Acts as a negative feedback regulator in tolerance to oxygen deprivation which requires ARAC4/ROP2. This is Rho GTPase-activating protein 4 (ROPGAP4) from Arabidopsis thaliana (Mouse-ear cress).